The sequence spans 280 residues: Urease accessory protein UreD (280 aa).

This sequence belongs to the UreD family. As to quaternary structure, ureD, UreF and UreG form a complex that acts as a GTP-hydrolysis-dependent molecular chaperone, activating the urease apoprotein by helping to assemble the nickel containing metallocenter of UreC. The UreE protein probably delivers the nickel.

It localises to the cytoplasm. Required for maturation of urease via the functional incorporation of the urease nickel metallocenter. The sequence is that of Urease accessory protein UreD from Vibrio parahaemolyticus.